Reading from the N-terminus, the 1587-residue chain is DNA topoisomerase 2 (1587 aa).

Over residues 1-15 (MSDADPFDMSDDDDN) the composition is skewed to acidic residues. Residues 1–47 (MSDADPFDMSDDDDNSVLSHTPPKKQKKAPTTKKGGSKPLADVENES) are disordered. Over residues 22-31 (PPKKQKKAPT) the composition is skewed to basic residues. Residues asparagine 126, asparagine 155, 183–185 (SSN), and 196–203 (GRNGFGAK) each bind ATP. Interaction with DNA stretches follow at residues 381–383 (KKK) and 381–386 (KKKNKN). Residue 415–417 (QTK) coordinates ATP. Residues 461-485 (MLKKTDGGRRSRMNNPKLTDANKAG) form a disordered region. Positions 492–606 (CTLILTEGDS…SLLKIPEFLI (115 aa)) constitute a Toprim domain. Residues glutamate 498, aspartate 575, and aspartate 577 each contribute to the Mg(2+) site. Residues 743–1190 (IPSVVDGLKP…SKEDIWKRDL (448 aa)) form the Topo IIA-type catalytic domain. Residue tyrosine 833 is the O-(5'-phospho-DNA)-tyrosine intermediate of the active site. Positions 1016 to 1025 (KLSKTMTTTN) are interaction with DNA. Residues 1204 to 1587 (EARRQRKVAN…PRPRRPRRRS (384 aa)) are disordered. The span at 1271–1280 (LSFLGKSSAK) shows a compositional bias: low complexity. Basic and acidic residues predominate over residues 1308 to 1320 (PKSEPKADPKPKD). Over residues 1321 to 1334 (EDEDIVMEDSDIEE) the composition is skewed to acidic residues. Basic and acidic residues predominate over residues 1348–1364 (VKPESEDGQAKIAEAPK). Residues 1365-1375 (RGRAAAKPKPK) show a composition bias toward basic residues. Acidic residues-rich tracts occupy residues 1379–1391 (EDEE…DDFM) and 1419–1430 (SDSDSDNGDDLL). Polar residues-rich tracts occupy residues 1441–1451 (GSTNGASTSDS) and 1466–1475 (GLKTTASKAS). Residues 1512 to 1521 (DNEPEDDDDE) show a composition bias toward acidic residues. The segment covering 1524–1542 (KPAAKGKAAAKGKSTAAAA) has biased composition (low complexity). The segment covering 1558–1568 (PKPPPRLPCPL) has biased composition (pro residues). Residues 1571 to 1587 (RRTHRSNPRPRRPRRRS) show a composition bias toward basic residues.

Belongs to the type II topoisomerase family. As to quaternary structure, homodimer. Mg(2+) serves as cofactor. Requires Mn(2+) as cofactor. It depends on Ca(2+) as a cofactor.

The protein localises to the nucleus. It catalyses the reaction ATP-dependent breakage, passage and rejoining of double-stranded DNA.. Control of topological states of DNA by transient breakage and subsequent rejoining of DNA strands. Topoisomerase II makes double-strand breaks. This is DNA topoisomerase 2 (TOP2) from Penicillium chrysogenum (Penicillium notatum).